The sequence spans 326 residues: 3-dehydrosphinganine reductase TSC10A (326 aa).

The Lumenal portion of the chain corresponds to 1-7 (MAAISPL). The helical transmembrane segment at 8 to 28 (FLLFLIPIIPLSLLAILALIV) threads the bilayer. At 29-264 (RPRPIKIPIK…KAMDGIKAGN (236 aa)) the chain is on the cytoplasmic side. NADPH-binding residues include Gly-46, Ser-48, Ser-49, Gly-50, Arg-71, Lys-75, and Asp-97. Residues 46–50 (GGSSG) carry the GXSXG motif. The Proton donor role is filled by Ser-174. Tyr-188 (proton acceptor) is an active-site residue. 2 residues coordinate NADP(+): Tyr-188 and Lys-192. Lys-192 (lowers pKa of active site Tyr) is an active-site residue. A helical membrane pass occupies residues 265 to 285 (FTVSCNFEGFLLSLATTGMSP). Topologically, residues 286 to 288 (QRS) are lumenal. The chain crosses the membrane as a helical span at residues 289-309 (FWLAFLEVITAGPIRLIALFF). Over 310–326 (QWDWYKAIEKWSKTKTK) the chain is Cytoplasmic.

The protein belongs to the short-chain dehydrogenases/reductases (SDR) family. In terms of tissue distribution, expressed in roots, leaves, stems, flowers and siliques.

The protein resides in the endoplasmic reticulum membrane. The catalysed reaction is sphinganine + NADP(+) = 3-oxosphinganine + NADPH + H(+). The protein operates within lipid metabolism; sphingolipid metabolism. Functionally, catalyzes the reduction of 3'-oxosphinganine (3-ketodihydrosphingosine/KDS) to sphinganine (dihydrosphingosine/DHS), the second step of de novo sphingolipid biosynthesis. In plants, sphingolipids seems to play a critical role in mineral ion homeostasis, most likely through their involvement in the ion transport functionalities of membrane systems in the root. Lacks stereospecificity and can also produce L-threo-DHS in addition to D-erythro-DHS. The chain is 3-dehydrosphinganine reductase TSC10A (TSC10A) from Arabidopsis thaliana (Mouse-ear cress).